The following is a 446-amino-acid chain: tRNA(Ile2) 2-agmatinylcytidine synthetase TiaS (446 aa).

This sequence belongs to the TiaS family.

The protein localises to the cytoplasm. The enzyme catalyses cytidine(34) in tRNA(Ile2) + agmatine + ATP + H2O = 2-agmatinylcytidine(34) in tRNA(Ile2) + AMP + 2 phosphate + 2 H(+). ATP-dependent agmatine transferase that catalyzes the formation of 2-agmatinylcytidine (agm2C) at the wobble position (C34) of tRNA(Ile2), converting the codon specificity from AUG to AUA. This Cenarchaeum symbiosum (strain A) protein is tRNA(Ile2) 2-agmatinylcytidine synthetase TiaS.